Here is a 265-residue protein sequence, read N- to C-terminus: Glutamate racemase (265 aa).

Residues 7–8 (DS) and 39–40 (YG) contribute to the substrate site. Cys-71 serves as the catalytic Proton donor/acceptor. 72 to 73 (NT) lines the substrate pocket. Cys-184 serves as the catalytic Proton donor/acceptor. Substrate is bound at residue 185 to 186 (TH).

The protein belongs to the aspartate/glutamate racemases family.

It carries out the reaction L-glutamate = D-glutamate. It functions in the pathway cell wall biogenesis; peptidoglycan biosynthesis. Provides the (R)-glutamate required for cell wall biosynthesis. This chain is Glutamate racemase, found in Sulfurovum sp. (strain NBC37-1).